We begin with the raw amino-acid sequence, 147 residues long: F420H(2)-dependent reductase Rv1155 (147 aa).

Coenzyme F420-(gamma-Glu)n contacts are provided by residues Gln-32, Gln-37, Ser-50, 56 to 60 (AKTRN), 77 to 79 (WSY), and His-138.

This sequence belongs to the F420H(2)-dependent biliverdin reductase family. In terms of assembly, homodimer.

Functionally, F420H(2)-dependent reductase able to catalyze the reduction of biliverdin-IXalpha to bilirubin-IXalpha in vitro. However, kinetic parameters show that it is less efficient than the biliverdin reductase Rv2074 and suggest biliverdin-IXalpha is unlikely to be the native substrate of Rv1155, which probably catalyzes the reduction of an alternative molecule in vivo. Binds coenzyme F420, but does not bind FMN or other flavins. Cannot use pyridoxine 5'-phosphate, pyridoxamine 5'-phosphate, pyridoxal 5'-phosphate (PLP), the anti-tuberculosis drug PA-824 or aflatoxin analogs as substrates. This Mycobacterium tuberculosis (strain ATCC 25618 / H37Rv) protein is F420H(2)-dependent reductase Rv1155.